A 381-amino-acid polypeptide reads, in one-letter code: Beta-lactamase CMY-2 (381 aa).

A signal peptide spans 1-20 (MMKKSLCCALLLTASFSTFA). Ser-84 functions as the Acyl-ester intermediate in the catalytic mechanism. Positions 84, 140, 170, and 172 each coordinate a beta-lactam.

The protein belongs to the class-C beta-lactamase family.

It catalyses the reaction a beta-lactam + H2O = a substituted beta-amino acid. Inhibited by the beta-lactamase-blocking agents sulbactam, tazobactam, avibactam and 3-aminophenylboronic acid (APB). In terms of biological role, class C beta-lactamase which confers resistance to penicillins and cephalosporins. Has nitrocefin-, cefoxitin- and cefoperazone-hydrolyzing activities. The sequence is that of Beta-lactamase CMY-2 from Klebsiella pneumoniae.